Here is a 78-residue protein sequence, read N- to C-terminus: Pigment-dispersing hormone peptides (78 aa).

The first 22 residues, 1 to 22 (MRSAVIVTMLVVVALAALLTQG), serve as a signal peptide directing secretion. At Ala75 the chain carries Alanine amide.

The protein belongs to the arthropod PDH family. Expressed in eyestalk tissue and cerebral ganglia.

Its subcellular location is the secreted. Its function is as follows. The pigment-dispersing hormone causes the migration of the distal retinal pigment into the proximal end of the pigment chromatophore cells and thus decreases the amount of light entering the retinulas. May also function as a neurotransmitter and/or neuromodulator. The protein is Pigment-dispersing hormone peptides of Carcinus maenas (Common shore crab).